The following is a 458-amino-acid chain: Argininosuccinate lyase (458 aa).

It belongs to the lyase 1 family. Argininosuccinate lyase subfamily.

It is found in the cytoplasm. The enzyme catalyses 2-(N(omega)-L-arginino)succinate = fumarate + L-arginine. It functions in the pathway amino-acid biosynthesis; L-arginine biosynthesis; L-arginine from L-ornithine and carbamoyl phosphate: step 3/3. This chain is Argininosuccinate lyase, found in Salmonella typhimurium (strain LT2 / SGSC1412 / ATCC 700720).